A 553-amino-acid chain; its full sequence is Pumilio domain-containing protein 5 (553 aa).

8 Pumilio repeats span residues aspartate 146–aspartate 184, lysine 185–arginine 223, lysine 224–glutamate 260, lysine 261–valine 296, lysine 297–asparagine 335, serine 347–glutamate 384, cysteine 386–aspartate 421, and glutamate 432–alanine 472. The interval phenylalanine 499 to valine 514 is RNA-binding.

As to expression, detected in differentiating oocytes with highest levels observed in developing ooctyes in the distal portion of the proximal gonad.

It localises to the cytoplasm. It is found in the P-body. Its function is as follows. RNA-binding protein that binds to the consensus sequence 5'-CUCUGUAUCUUGU-3' in mRNA 3'-UTRs and modulates mRNA expression and stability. Functions redundantly with puf-6 and puf-7 in oocyte formation and organization, early embryonic cell divisions, and repression of expression of glp-1 and other maternal mRNAs in late oogenesis. The polypeptide is Pumilio domain-containing protein 5 (Caenorhabditis elegans).